A 99-amino-acid polypeptide reads, in one-letter code: MNQERVFKVLLGPHVSEKATVLADKKGQFVFKVATDATKLEIKKAVESLFSVQVERVTTLNVLGKSKRTARGLGKRNDWKKAVISLQPGQDLDFSSSAE.

This sequence belongs to the universal ribosomal protein uL23 family. As to quaternary structure, part of the 50S ribosomal subunit. Contacts protein L29, and trigger factor when it is bound to the ribosome.

In terms of biological role, one of the early assembly proteins it binds 23S rRNA. One of the proteins that surrounds the polypeptide exit tunnel on the outside of the ribosome. Forms the main docking site for trigger factor binding to the ribosome. In Pseudomonas savastanoi pv. phaseolicola (strain 1448A / Race 6) (Pseudomonas syringae pv. phaseolicola (strain 1448A / Race 6)), this protein is Large ribosomal subunit protein uL23.